A 186-amino-acid chain; its full sequence is Negative modulator of initiation of replication (186 aa).

It belongs to the SeqA family. As to quaternary structure, homodimer. Polymerizes to form helical filaments.

It is found in the cytoplasm. Functionally, negative regulator of replication initiation, which contributes to regulation of DNA replication and ensures that replication initiation occurs exactly once per chromosome per cell cycle. Binds to pairs of hemimethylated GATC sequences in the oriC region, thus preventing assembly of replication proteins and re-initiation at newly replicated origins. Repression is relieved when the region becomes fully methylated. The sequence is that of Negative modulator of initiation of replication from Glaesserella parasuis serovar 5 (strain SH0165) (Haemophilus parasuis).